A 382-amino-acid polypeptide reads, in one-letter code: Sphingosine kinase 1 (382 aa).

The DAGKc domain maps to 12-159 (PRPCRVLVLL…MNLLSLHTAS (148 aa)). Residues 22–24 (NPQ) and 54–58 (TERKN) contribute to the ATP site. Position 79–82 (79–82 (SGDG)) interacts with substrate. Residue Asp81 is the Proton donor/acceptor of the active site. Residues Glu86 and 111–113 (GSG) contribute to the ATP site. Short sequence motifs (nuclear export signal) lie at residues 147–155 (LSPMNLLSL) and 161–169 (LRLYSVLSL). Asp178 contributes to the substrate binding site. ATP contacts are provided by Arg185 and Arg191. The residue at position 193 (Thr193) is a Phosphothreonine. A Phosphoserine modification is found at Ser225. 340–342 (DGE) contributes to the ATP binding site.

Interacts with ACY1. Binds to calmodulin. Interacts with SPHKAP. Interacts with CIB1, the interaction occurs in a calcium-dependent manner. Interacts with TRAF2. Interacts with EEF1A1; the interaction enhances SPHK1 kinase activity. Mg(2+) serves as cofactor. As to expression, widely expressed. Expressed in brain (at protein level). Detected in neurons.

The protein localises to the cytoplasm. Its subcellular location is the endosome membrane. The protein resides in the nucleus. It localises to the cell membrane. It is found in the synapse. It catalyses the reaction a sphingoid base + ATP = a sphingoid 1-phosphate + ADP + H(+). It carries out the reaction L-seryl-[protein] + acetyl-CoA = O-acetyl-L-seryl-[protein] + CoA. The enzyme catalyses sphinganine + ATP = sphinganine 1-phosphate + ADP + H(+). The catalysed reaction is sphing-4-enine + ATP = sphing-4-enine 1-phosphate + ADP + H(+). It catalyses the reaction 1-O-hexadecyl-2-amino-sn-glycerol + ATP = 1-O-hexadecyl-2-desoxy-2-amino-sn-glycero-3-phosphate + ADP + H(+). Acetyltransferase activity increases in presence of the kinase substrate, sphingosine. In Purkinje cells, kinase activity on sphingosine increases in presence of VEGFA. In neurons, kinase activity increases during the first 24h in presence of Amyloid-beta protein 42 to decrease after 96h. Catalyzes the phosphorylation of sphingosine to form sphingosine 1-phosphate (SPP), a lipid mediator with both intra- and extracellular functions. Also acts on D-erythro-sphingosine and to a lesser extent sphinganine, but not other lipids, such as D,L-threo-dihydrosphingosine, N,N-dimethylsphingosine, diacylglycerol, ceramide, or phosphatidylinositol. In contrast to proapoptotic SPHK2, has a negative effect on intracellular ceramide levels, enhances cell growth and inhibits apoptosis. Involved in the regulation of inflammatory response and neuroinflammation. Via the product sphingosine 1-phosphate, stimulates TRAF2 E3 ubiquitin ligase activity, and promotes activation of NF-kappa-B in response to TNF signaling. In response to TNF and in parallel to NF-kappa-B activation, negatively regulates RANTES induction through p38 MAPK signaling pathway. Involved in endocytic membrane trafficking induced by sphingosine, recruited to dilate endosomes, also plays a role on later stages of endosomal maturation and membrane fusion independently of its kinase activity. In Purkinje cells, seems to be also involved in the regulation of autophagosome-lysosome fusion upon VEGFA. Its function is as follows. Has serine acetyltransferase activity on PTGS2/COX2 in an acetyl-CoA dependent manner. The acetyltransferase activity increases in presence of the kinase substrate, sphingosine. During neuroinflammation, through PTGS2 acetylation, promotes neuronal secretion of specialized preresolving mediators (SPMs), especially 15-R-lipoxin A4, which results in an increase of phagocytic microglia. This is Sphingosine kinase 1 from Mus musculus (Mouse).